The primary structure comprises 1077 residues: Histone deacetylase 4 (1077 aa).

The stretch at 66-169 (REQQLQQELL…GKESAVASTE (104 aa)) forms a coiled coil. An interaction with MEF2A region spans residues 117 to 312 (MLAMKHQQEL…NSSSGNVSTE (196 aa)). Residues 132 to 162 (KLERHRQEQELEKQHREQKLQQLKNKEKGKE) show a composition bias toward basic and acidic residues. 3 disordered regions span residues 132 to 167 (KLERHRQEQELEKQHREQKLQQLKNKEKGKESAVAS), 204 to 225 (KTQHSSLDQSSPPQSGVSASYN), and 239 to 327 (PLRK…AETS). Polar residues predominate over residues 205-224 (TQHSSLDQSSPPQSGVSASY). Residue Ser-209 is modified to Phosphoserine. Position 245 is a phosphoserine; by CaMK4 and SIK1 (Ser-245). The segment covering 258–273 (KVAERRSSPLLRRKDG) has biased composition (basic and acidic residues). Low complexity predominate over residues 289–310 (SACSSAPGSGPSSPNSSSGNVS). A PxLPxI/L motif; mediates interaction with ANKRA2 and 14-3-3 proteins motif is present at residues 348–353 (PSLPNI). Ser-349 is subject to Phosphoserine. Ser-466 is modified (phosphoserine; by CaMK4 and SIK1). Disordered stretches follow at residues 508-530 (SKPSEPPRQPESHPEETEEELRE), 542-582 (RLPG…RPAT), and 623-646 (RPLSRAQSSPASATFPMSVQEPPT). The segment covering 515 to 530 (RQPESHPEETEEELRE) has biased composition (basic and acidic residues). Residue Lys-557 forms a Glycyl lysine isopeptide (Lys-Gly) (interchain with G-Cter in SUMO) linkage. Residues Ser-563, Ser-630, and Ser-631 each carry the phosphoserine modification. The span at 627-639 (RAQSSPASATFPM) shows a compositional bias: polar residues. Positions 653–1077 (GLVYDTLMLK…EEPMEEEPPL (425 aa)) are histone deacetylase. Zn(2+) contacts are provided by Cys-665, Cys-667, His-673, and Cys-744. His-796 is a catalytic residue. The Nuclear export signal motif lies at 1044-1077 (EEAETVTAMASLSVGVKPAEKRSEEEPMEEEPPL). Residues 1052 to 1077 (MASLSVGVKPAEKRSEEEPMEEEPPL) form a disordered region.

The protein belongs to the histone deacetylase family. HD type 2 subfamily. Homodimer. Homodimerization via its N-terminal domain. Interacts with HDAC7. Interacts with MEF2A, MEF2C, MEF2D, MORC2 and NR2C1. Interacts with a 14-3-3 chaperone proteins in a phosphorylation dependent manner. Interacts with 14-3-3 protein YWHAB. Interacts with KDM5B and AHRR. Interacts with BTBD14B. Interacts with MYOCD. Interacts (via PxLPxI/L motif) with ANKRA2 (via ankyrin repeats). Interacts with CUL7 (as part of the 3M complex); negatively regulated by ANKRA2. Interacts with EP300 in the presence of TFAP2C. Interacts with HSPA1A and HSPA1B leading to their deacetylation at 'Lys-77'. Interacts with ZBTB7B; the interaction allows the recruitment of HDAC4 on CD8 loci for deacetylation and possible inhibition of CD8 genes expression. Interacts with DHX36. Interacts with SIK3; this interaction leads to HDAC4 retention in the cytoplasm. Post-translationally, phosphorylated by CaMK4 at Ser-245, Ser-466 and Ser-630. Phosphorylation at other residues by CaMK2D is required for the interaction with 14-3-3. Phosphorylation at Ser-349, within the PxLPxI/L motif, impairs the binding of ANKRA2 but generates a high-affinity docking site for 14-3-3. Sumoylation on Lys-557 is promoted by the E3 SUMO-protein ligase RANBP2, and prevented by phosphorylation by CaMK4.

The protein localises to the nucleus. The protein resides in the cytoplasm. The enzyme catalyses N(6)-acetyl-L-lysyl-[histone] + H2O = L-lysyl-[histone] + acetate. Its function is as follows. Responsible for the deacetylation of lysine residues on the N-terminal part of the core histones (H2A, H2B, H3 and H4). Histone deacetylation gives a tag for epigenetic repression and plays an important role in transcriptional regulation, cell cycle progression and developmental events. Histone deacetylases act via the formation of large multiprotein complexes. Involved in muscle maturation via its interaction with the myocyte enhancer factors such as MEF2A, MEF2C and MEF2D. Deacetylates HSPA1A and HSPA1B at 'Lys-77' leading to their preferential binding to co-chaperone STUB1. This is Histone deacetylase 4 (Hdac4) from Rattus norvegicus (Rat).